A 323-amino-acid chain; its full sequence is MADVDKLNIDSIIQRLLEVRGSKPGKNVQLQENEIRGLCLKSREIFLSQPILLELEAPLKICGDIHGQYYDLLRLFEYGGFPPESNYLFLGDYVDRGKQSLETICLLLAYKIKYPENFFLLRGNHECASINRIYGFYDECKRRYNIKLWKTFTDCFNCLPIAAIVDEKIFCCHGGLSPDLQSMEQIRRIMRPTDVPDQGLLCDLLWSDPDKDVLGWGENDRGVSFTFGAEVVAKFLHKHDLDLICRAHQVVEDGYEFFAKRQLVTLFSAPNYCGEFDNAGAMMSVDETLMCSFQILKPAEKKKPNASRPVTPPRGIITKQAKK.

Positions 64, 66, 92, and 124 each coordinate Mn(2+). Catalysis depends on H125, which acts as the Proton donor. H173 and H248 together coordinate Mn(2+). The tract at residues 301–323 is disordered; it reads KKKPNASRPVTPPRGIITKQAKK.

It belongs to the PPP phosphatase family. PP-1 subfamily. PP1 comprises a catalytic subunit, ppp1c1, ppp1cb or ppp1cc, which is folded into its native form by inhibitor 2 and glycogen synthetase kinase 3, and then is complexed to one or several targeting or regulatory subunits. Mn(2+) is required as a cofactor.

It is found in the cytoplasm. The protein localises to the nucleus. It localises to the cleavage furrow. Its subcellular location is the nucleolus. The protein resides in the nucleoplasm. It is found in the chromosome. The protein localises to the centromere. It localises to the kinetochore. Its subcellular location is the nucleus speckle. The protein resides in the midbody. It is found in the mitochondrion. The enzyme catalyses O-phospho-L-seryl-[protein] + H2O = L-seryl-[protein] + phosphate. It carries out the reaction O-phospho-L-threonyl-[protein] + H2O = L-threonyl-[protein] + phosphate. Functionally, protein phosphatase that associates with over 200 regulatory proteins to form highly specific holoenzymes which dephosphorylate hundreds of biological targets. Protein phosphatase 1 (PP1) is essential for cell division, and participates in the regulation of glycogen metabolism, muscle contractility and protein synthesis. Promotes nuclear envelope reassembly by targeting nuclear membrane vesicles to chromatin at the end of mitosis. Acts by dephosphorylating membrane proteins such as lamin B receptor (lbr) to regulate the binding of membrane proteins to chromatin. In Xenopus laevis (African clawed frog), this protein is Serine/threonine-protein phosphatase PP1-gamma catalytic subunit B (ppp1cc-b).